The sequence spans 619 residues: MNASGSGYPLASLYVGDLHPDVTEAMLYEKFSPAGPILSIRVCRDVATRRSLGYAYINFQQPADAERALDTMNFEMLKGQPIRIMWSQRDPGLRKSGVGNIFIKNLEDSIDNKALYDTFSTFGNILSCKVACDEHGSRGFGFVHFETHEAAQQAINTMNGMLLNDRKVFVGHFKSRREREAELGARALEFTNIYVKNLPVDVDEQGLQDLFSQFGKMLSVKVMRDNSGHSRCFGFVNFEKHEEAQKAVVHMNGKEVSGRLLYAGRAQKRVERQNELKRRFEQMKQDRLRRYQGVNLYVKNLDDSIDDDKLRKEFSPYGVITSAKVMTEGGHSKGFGFVCFSSPEEATKAVTEMNGRIVGTKPLYVALAQRKEERKAILTNQYMQRLSTMRTLSNPLLGSFQQPSSYFLPAMPQPPAQAAYYGCGPVTPTQPAPRWTSQPPRPSSAYPPGASMVRPPVVPRRPPAHISSVRQASTQVPRTVPHTQRVANIGTQTTGPSGVGCCTPGRPLLPCKCSSAAHSTYRVQEPAVHIPGQEPLTASMLAAAPLHEQKQMIGERLYPLIHDVHTQLAGKITGMLLEIDNSELLLMLESPESLHAKIDEAVAVLQAHQAMEQPKAYMH.

4 consecutive RRM domains span residues 11 to 89 (ASLY…WSQR), 99 to 175 (GNIF…HFKS), 191 to 268 (TNIY…RAQK), and 294 to 370 (VNLY…LAQR). The interval 431–458 (PAPRWTSQPPRPSSAYPPGASMVRPPVV) is disordered. The PABC domain occupies 533-610 (QEPLTASMLA…AVAVLQAHQA (78 aa)).

It belongs to the polyadenylate-binding protein type-1 family. Expressed in ovary and testis. Also expressed in pancreas, liver and thymus, and at lower levels in other somatic tissues including brain and lung.

It localises to the cytoplasm. Its function is as follows. Poly(A)-binding protein involved in oocyte maturation and early embryo development. It is required for cytosolic mRNA polyadenylation and translational activation of maternally stored mRNA in oocytes. The polypeptide is Polyadenylate-binding protein 1-like (Homo sapiens (Human)).